We begin with the raw amino-acid sequence, 301 residues long: GTPase Era (301 aa).

One can recognise an Era-type G domain in the interval 6–173 (KSGFVAIVGR…LEQTNANLEI (168 aa)). The G1 stretch occupies residues 14–21 (GRPNVGKS). 14 to 21 (GRPNVGKS) is a binding site for GTP. The tract at residues 40-44 (QTTRN) is G2. A G3 region spans residues 61–64 (DTPG). GTP-binding positions include 61–65 (DTPGI) and 123–126 (NKID). Residues 123 to 126 (NKID) form a G4 region. Positions 152–154 (ISA) are G5. Residues 204–282 (TREEVPHSVA…FLEIWVKVQK (79 aa)) enclose the KH type-2 domain.

It belongs to the TRAFAC class TrmE-Era-EngA-EngB-Septin-like GTPase superfamily. Era GTPase family. As to quaternary structure, monomer.

Its subcellular location is the cytoplasm. The protein localises to the cell membrane. An essential GTPase that binds both GDP and GTP, with rapid nucleotide exchange. Plays a role in 16S rRNA processing and 30S ribosomal subunit biogenesis and possibly also in cell cycle regulation and energy metabolism. The sequence is that of GTPase Era from Listeria welshimeri serovar 6b (strain ATCC 35897 / DSM 20650 / CCUG 15529 / CIP 8149 / NCTC 11857 / SLCC 5334 / V8).